Consider the following 500-residue polypeptide: Cytochrome c-552 (500 aa).

A signal peptide spans 1-24; sequence MKFLIKSLAVATISILGCLQTALA. The heme c site is built by His102, Cys130, Cys133, Lys134, Cys168, Cys171, His172, Cys217, Cys220, and His221. Ca(2+) contacts are provided by Glu223, Tyr224, Lys268, and Gln270. Position 224 (Tyr224) interacts with substrate. His271 is a substrate binding site. His282, Cys289, Cys292, His293, His308, Cys321, Cys324, His325, and His400 together coordinate heme c. Residues 477–500 are disordered; it reads ARAKGLLPAEEADKPVAAPKAEAK.

The protein belongs to the cytochrome c-552 family. Ca(2+) is required as a cofactor. The cofactor is heme c.

The protein localises to the periplasm. The catalysed reaction is 6 Fe(III)-[cytochrome c] + NH4(+) + 2 H2O = 6 Fe(II)-[cytochrome c] + nitrite + 8 H(+). Its pathway is nitrogen metabolism; nitrate reduction (assimilation). In terms of biological role, catalyzes the reduction of nitrite to ammonia, consuming six electrons in the process. The polypeptide is Cytochrome c-552 (Mannheimia haemolytica (Pasteurella haemolytica)).